The primary structure comprises 538 residues: Carotenoid 9,10(9',10')-cleavage dioxygenase 1 (538 aa).

Fe cation is bound by residues His222, His270, His336, and His523.

The protein belongs to the carotenoid oxygenase family. In terms of assembly, homodimer. Fe(2+) is required as a cofactor. As to expression, high expression in flowers and siliques. Also detected in stems, leaves and roots.

The protein resides in the cytoplasm. The enzyme catalyses all-trans-zeaxanthin + 2 O2 = 4,9-dimethyldodeca-2,4,6,8,10-pentaenedial + 2 (3R)-hydroxy-beta-ionone. Its function is as follows. Cleaves a variety of carotenoids symmetrically at both the 9-10 and 9'-10' double bonds. Active on beta,beta-carotene, lutein, zeaxanthin, all-trans-violaxanthin, 9-cis-violaxanthin and 9'-cis-neoxanthin. With most substrates, the carotenoid is symmetrically cleaved. Probably not involved in abscisic acid biosynthesis. The sequence is that of Carotenoid 9,10(9',10')-cleavage dioxygenase 1 (CCD1) from Arabidopsis thaliana (Mouse-ear cress).